Reading from the N-terminus, the 184-residue chain is ATP synthase subunit b, chloroplastic (184 aa).

The chain crosses the membrane as a helical span at residues Leu27–Leu49.

The protein belongs to the ATPase B chain family. In terms of assembly, F-type ATPases have 2 components, F(1) - the catalytic core - and F(0) - the membrane proton channel. F(1) has five subunits: alpha(3), beta(3), gamma(1), delta(1), epsilon(1). F(0) has four main subunits: a(1), b(1), b'(1) and c(10-14). The alpha and beta chains form an alternating ring which encloses part of the gamma chain. F(1) is attached to F(0) by a central stalk formed by the gamma and epsilon chains, while a peripheral stalk is formed by the delta, b and b' chains.

The protein resides in the plastid. The protein localises to the chloroplast thylakoid membrane. In terms of biological role, f(1)F(0) ATP synthase produces ATP from ADP in the presence of a proton or sodium gradient. F-type ATPases consist of two structural domains, F(1) containing the extramembraneous catalytic core and F(0) containing the membrane proton channel, linked together by a central stalk and a peripheral stalk. During catalysis, ATP synthesis in the catalytic domain of F(1) is coupled via a rotary mechanism of the central stalk subunits to proton translocation. Its function is as follows. Component of the F(0) channel, it forms part of the peripheral stalk, linking F(1) to F(0). In Solanum bulbocastanum (Wild potato), this protein is ATP synthase subunit b, chloroplastic.